Consider the following 139-residue polypeptide: Type II methyltransferase M.AquIB (139 aa).

The SAM-dependent MTase C5-type domain occupies 1-135 (MDIKNVHIKN…KAVSEQLLDV (135 aa)). Residues 38–58 (KTFGSTYRRLDPNQPSPTVTR) are disordered.

Belongs to the class I-like SAM-binding methyltransferase superfamily. C5-methyltransferase family. In terms of assembly, heterodimer of an alpha and a beta subunit.

It catalyses the reaction a 2'-deoxycytidine in DNA + S-adenosyl-L-methionine = a 5-methyl-2'-deoxycytidine in DNA + S-adenosyl-L-homocysteine + H(+). In terms of biological role, a methylase, recognizes the double-stranded sequence 5'-CYCGRG-3', methylates C-1 on both strands, and protects the DNA from cleavage by the AquI endonuclease. This chain is Type II methyltransferase M.AquIB (aquIMB), found in Picosynechococcus sp. (strain ATCC 27264 / PCC 7002 / PR-6) (Agmenellum quadruplicatum).